The primary structure comprises 577 residues: Vacuolar protein sorting-associated protein 45 (577 aa).

This sequence belongs to the STXBP/unc-18/SEC1 family. As to quaternary structure, interacts with PEP7 and TLG2.

It localises to the cytoplasm. The protein resides in the vacuole membrane. Essential for vacuolar protein sorting. Function in membrane traffic between the Golgi and the vacuole. In Saccharomyces cerevisiae (strain ATCC 204508 / S288c) (Baker's yeast), this protein is Vacuolar protein sorting-associated protein 45 (VPS45).